We begin with the raw amino-acid sequence, 230 residues long: MITSIRYRGFSFYYKDNDNKYKEIFDEILAYNFKTVKVLRNIDDTKVSLIDTKYGRYVFKVFAPKTKRNERFLKSFVKGDYYQNLIVETDRVRSAGLTFPNDFYFLAERKIFNYASVFIMLIEYVEGVELNDMPIIPENVKAEIKASMEKLHALNMLSGDPHRGNFIVSKDGVRIIDLSGKSCTAERKARDRLAMERHLGIANEIKDYGYYSVIYRTKLRKFIKKLKGKA.

This sequence belongs to the protein kinase superfamily. RfaY/WaaY family.

The catalysed reaction is alpha-D-Glc-(1-&gt;3)-[L-alpha-D-Hep-(1-&gt;7)]-L-alpha-D-Hep-(1-&gt;3)-4-O-PO3(2-)-L-alpha-D-Hep-(1-&gt;5)-[alpha-Kdo-(2-&gt;4)]-alpha-Kdo-(2-&gt;6)-lipid A + ATP = alpha-D-Glc-(1-&gt;3)-[L-alpha-D-Hep-(1-&gt;7)]-4-O-PO3(2-)-L-alpha-D-Hep-(1-&gt;3)-4-O-PO3(2-)-L-alpha-D-Hep-(1-&gt;5)-[alpha-Kdo-(2-&gt;4)]-alpha-Kdo-(2-&gt;6)-lipid A + ADP + H(+). It participates in bacterial outer membrane biogenesis; LPS core biosynthesis. Functionally, kinase involved in the biosynthesis of the core oligosaccharide region of lipopolysaccharide (LPS). Catalyzes the phosphorylation of the second heptose unit (HepII) of the inner core. This chain is Lipopolysaccharide core heptose(II) kinase WaaY, found in Escherichia coli.